The following is a 124-amino-acid chain: Conotoxin Im14.2 (124 aa).

The N-terminal stretch at 1-20 (MARFLSILLCFAMATGLAAG) is a signal peptide. Residues 21 to 99 (IRYPDRVLGR…AENPVRDPKK (79 aa)) constitute a propeptide that is removed on maturation.

In terms of processing, contain 2 disulfide bonds. In terms of tissue distribution, expressed by the venom duct.

It localises to the secreted. Functionally, probable neurotoxin. The protein is Conotoxin Im14.2 of Conus imperialis (Imperial cone).